The sequence spans 338 residues: D-erythrose-4-phosphate dehydrogenase (338 aa).

An NAD(+)-binding site is contributed by 12 to 13 (RI). Substrate-binding positions include 154 to 156 (SCT), R200, 213 to 214 (TK), and R236. C155 (nucleophile) is an active-site residue. N318 serves as a coordination point for NAD(+).

It belongs to the glyceraldehyde-3-phosphate dehydrogenase family. Epd subfamily. Homotetramer.

It localises to the cytoplasm. It carries out the reaction D-erythrose 4-phosphate + NAD(+) + H2O = 4-phospho-D-erythronate + NADH + 2 H(+). It participates in cofactor biosynthesis; pyridoxine 5'-phosphate biosynthesis; pyridoxine 5'-phosphate from D-erythrose 4-phosphate: step 1/5. Catalyzes the NAD-dependent conversion of D-erythrose 4-phosphate to 4-phosphoerythronate. This is D-erythrose-4-phosphate dehydrogenase from Pectobacterium atrosepticum (strain SCRI 1043 / ATCC BAA-672) (Erwinia carotovora subsp. atroseptica).